Reading from the N-terminus, the 177-residue chain is Nucleoside triphosphate/diphosphate phosphatase (177 aa).

R23 functions as the Proton donor in the catalytic mechanism. Residues N87, D103, D105, D107, D120, and E123 each contribute to the Mg(2+) site.

It belongs to the Ntdp family. It depends on Mg(2+) as a cofactor.

The catalysed reaction is a ribonucleoside 5'-triphosphate + H2O = a ribonucleoside 5'-diphosphate + phosphate + H(+). The enzyme catalyses a ribonucleoside 5'-diphosphate + H2O = a ribonucleoside 5'-phosphate + phosphate + H(+). Its function is as follows. Has nucleoside phosphatase activity towards nucleoside triphosphates and nucleoside diphosphates. The protein is Nucleoside triphosphate/diphosphate phosphatase of Streptococcus mutans serotype c (strain ATCC 700610 / UA159).